Here is a 143-residue protein sequence, read N- to C-terminus: MQLNNLKPAAGSKHAKRRVGRGIGSGLGKTAGRGHKGQKSRSGGFHKVGFEGGQMPLHRRLPKRGFTSLTKEFTAEVRLGDLAGLPIEEVDLLSLKQAGLVGEMVKSAKVILSGEIDKKVTLKGIGATAGAKAAIEAAGGSLA.

Positions 1–57 (MQLNNLKPAAGSKHAKRRVGRGIGSGLGKTAGRGHKGQKSRSGGFHKVGFEGGQMPL) are disordered. Over residues 21 to 31 (RGIGSGLGKTA) the composition is skewed to gly residues.

It belongs to the universal ribosomal protein uL15 family. In terms of assembly, part of the 50S ribosomal subunit.

In terms of biological role, binds to the 23S rRNA. This chain is Large ribosomal subunit protein uL15, found in Ralstonia pickettii (strain 12J).